An 877-amino-acid chain; its full sequence is MAAERYNPRVAEAHWQKVWEENRTFETDNSDSREKYYVLEMFPYPSGRIHMGHVRNYAMGDVVARYKRAKGFNVLHPMGWDAFGMPAENAAMQNKVHPKEWTYQNIATMKRQLKSMGLSLDWSREFATCDVEYYHRQQMLFIDLYEKGLVTRKTSKVNWDPVDNTVLANEQVVDGRGWRSGALVEQRELTQWFFKITDFSEELLAGLDTLDQWPEKVRLMQRNWIGKSEGLQVRFALAAGTAPAGFSEVEVYTTRPDTLFGAAFVAISADHPLAKKLSEGNAALSSFIEECHQQGTSLAALETAEKKGFDTGIKVKHPFDDNWELPVYVANFVLMEYGTGAVFGCPAHDQRDLDFANKYKLKVTPVVLPKGEDAASFSIGETAYTDDGVMINSRFLDGMTPEAAFNEVASRLEKTDLVGRPQAVRKVQFRLRDWGISRQRYWGCPIPMIHCESCGVNPVPRADLPVKLPDDVEFDRPGNPLDRHATWRHVKCPKCGGDARRETDTMDTFVDSSWYYTRFTAPWENEPTDRKAADHWLPVDQYIGGIEHAILHLLYSRFFTRAMKVAGHVGVDEPFKGLFTQGMVVHETYKANGQWVSPADIRIEEIDGKRVATMLDSGAPVEIGSIEKMSKSKKNVVDPDDIIASYGADTARWFVLSDSPPERDVIWTEAGAEGAHRFVQRIWRLVAEAAPALKDVAPKAGTQGEALGVSKAAHKAVKAVGDDIEKLAFNRGVARLYELVNTLSGALQQAADGKADAEMKGALREATEMLVLMTAPMMPHLAEQCLAELGGKVAGKETLVARAPWPVFDPALVVENEIVLPVQINGKKRGDLTIARDADQASIQQAVLELDFVKAALNGGSPKKIIVVPQRIVNVVA.

A 'HIGH' region motif is present at residues 43–53 (PYPSGRIHMGH). The 'KMSKS' region signature appears at 628–632 (KMSKS). Lys631 contributes to the ATP binding site.

This sequence belongs to the class-I aminoacyl-tRNA synthetase family.

The protein localises to the cytoplasm. It carries out the reaction tRNA(Leu) + L-leucine + ATP = L-leucyl-tRNA(Leu) + AMP + diphosphate. This is Leucine--tRNA ligase from Brucella melitensis biotype 2 (strain ATCC 23457).